We begin with the raw amino-acid sequence, 228 residues long: Cutinase CUT1 (228 aa).

The signal sequence occupies residues 1–16 (MQFITVALTLIALASA). A disulfide bridge connects residues C49 and C127. S138 (nucleophile) is an active-site residue. C189 and C196 form a disulfide bridge. Residue N190 is glycosylated (N-linked (GlcNAc...) asparagine). Residue D193 is part of the active site. The Proton donor/acceptor role is filled by H206.

It belongs to the cutinase family. In terms of processing, the 2 disulfide bonds play a critical role in holding the catalytic residues in juxta-position; reduction of the disulfide bridges results in the complete inactivation of the enzyme.

It is found in the secreted. The enzyme catalyses cutin + H2O = cutin monomers.. Functionally, catalyzes the hydrolysis of complex carboxylic polyesters found in the cell wall of plants. Degrades cutin, a macromolecule that forms the structure of the plant cuticle. Required for efficient penetration of the host plant cuticle by the appressorium during the initial stage of fungal infection. This chain is Cutinase CUT1, found in Pyricularia oryzae (strain 70-15 / ATCC MYA-4617 / FGSC 8958) (Rice blast fungus).